The primary structure comprises 449 residues: Trigger factor (449 aa).

The region spanning 173-258 is the PPIase FKBP-type domain; it reads GDRVTLDFVG…LKKVEWAHLP (86 aa).

It belongs to the FKBP-type PPIase family. Tig subfamily.

Its subcellular location is the cytoplasm. The enzyme catalyses [protein]-peptidylproline (omega=180) = [protein]-peptidylproline (omega=0). In terms of biological role, involved in protein export. Acts as a chaperone by maintaining the newly synthesized protein in an open conformation. Functions as a peptidyl-prolyl cis-trans isomerase. The protein is Trigger factor of Cupriavidus metallidurans (strain ATCC 43123 / DSM 2839 / NBRC 102507 / CH34) (Ralstonia metallidurans).